Reading from the N-terminus, the 385-residue chain is Cytochrome b (385 aa).

Helical transmembrane passes span 32 to 52 (MGSL…FMAM), 76 to 98 (WLLR…MHMA), 113 to 133 (VWII…LGYC), and 179 to 199 (FFAL…MHFM). 2 residues coordinate heme b: histidine 82 and histidine 96. Residues histidine 183 and histidine 197 each coordinate heme b. Residue histidine 202 participates in a ubiquinone binding. Helical transmembrane passes span 225–245 (FIFK…LFVF), 289–309 (LLGV…PLTD), 321–341 (ISKL…VLGS), and 348–368 (FVQM…IFVP).

Belongs to the cytochrome b family. Fungal cytochrome b-c1 complex contains 10 subunits; 3 respiratory subunits, 2 core proteins and 5 low-molecular weight proteins. Cytochrome b-c1 complex is a homodimer. The cofactor is heme b.

It localises to the mitochondrion inner membrane. Its function is as follows. Component of the ubiquinol-cytochrome c reductase complex (complex III or cytochrome b-c1 complex) that is part of the mitochondrial respiratory chain. The b-c1 complex mediates electron transfer from ubiquinol to cytochrome c. Contributes to the generation of a proton gradient across the mitochondrial membrane that is then used for ATP synthesis. The polypeptide is Cytochrome b (COB) (Monosporozyma servazzii (Yeast)).